Consider the following 272-residue polypeptide: Putative esterase/lipase 3 (272 aa).

H34 is a catalytic residue. S100 serves as the catalytic Charge relay system.

Belongs to the lipase/esterase LIP3/BchO family.

In Mycoplasma pneumoniae (strain ATCC 29342 / M129 / Subtype 1) (Mycoplasmoides pneumoniae), this protein is Putative esterase/lipase 3.